Here is a 573-residue protein sequence, read N- to C-terminus: Urease subunit alpha (573 aa).

A Urease domain is found at 136-573 (GAIDCHVHFI…LPMAQRYFLF (438 aa)). Ni(2+)-binding residues include H141, H143, and K224. K224 is subject to N6-carboxylysine. Residue H226 participates in substrate binding. Positions 253 and 279 each coordinate Ni(2+). The Proton donor role is filled by H327. D367 contacts Ni(2+).

Belongs to the metallo-dependent hydrolases superfamily. Urease alpha subunit family. Heterotrimer of UreA (gamma), UreB (beta) and UreC (alpha) subunits. Three heterotrimers associate to form the active enzyme. Requires Ni cation as cofactor. Carboxylation allows a single lysine to coordinate two nickel ions.

The protein localises to the cytoplasm. The enzyme catalyses urea + 2 H2O + H(+) = hydrogencarbonate + 2 NH4(+). Its pathway is nitrogen metabolism; urea degradation; CO(2) and NH(3) from urea (urease route): step 1/1. In Nocardia farcinica (strain IFM 10152), this protein is Urease subunit alpha.